Reading from the N-terminus, the 586-residue chain is Ezrin (586 aa).

One can recognise an FERM domain in the interval 2–296 (PKPINVRVTT…NHELYMRRRK (295 aa)). N6-acetyllysine is present on Lys-60. The short motif at 115 to 120 (IYCPPE) is the [IL]-x-C-x-x-[DE] motif element. Tyr-146 is subject to Phosphotyrosine; by PDGFR. The interval 244–586 (EIRNISFNDK…KQRIDEFEAL (343 aa)) is interaction with SCYL3. The stretch at 302–462 (VQQMKAQARE…QDDLVKTKEE (161 aa)) forms a coiled coil. The interval 306–341 (KAQAREEKHQKQLERQQLETEKKRRETVEREKEQMM) is disordered. Over residues 308–341 (QAREEKHQKQLERQQLETEKKRRETVEREKEQMM) the composition is skewed to basic and acidic residues. Residue Tyr-354 is modified to Phosphotyrosine; by PDGFR. Ser-366 carries the phosphoserine modification. Tyr-478 is modified (phosphotyrosine). Residues 485-564 (VQESLQDEGA…NENMRQGRDK (80 aa)) form a disordered region. The segment covering 507 to 528 (GIRDDRNEEKRITEAEKNERVQ) has biased composition (basic and acidic residues). The span at 530-539 (QLLTLSSELS) shows a compositional bias: polar residues. At Ser-535 the chain carries Phosphoserine. Over residues 540–564 (QARDENKRTHNDIIHNENMRQGRDK) the composition is skewed to basic and acidic residues. Thr-567 carries the phosphothreonine; by ROCK2 and PKC/PRKCI modification.

Monomer. Homodimer. Interacts with PALS1 and NHERF2. Found in a complex with EZR, PODXL and NHERF2. Interacts with MCC, PLEKHG6, PODXL, SCYL3/PACE1, NHERF1 and TMEM8B. Interacts (when phosphorylated) with FES/FPS. Interacts with dimeric S100P, the interaction may be activating through unmasking of F-actin binding sites. Identified in complexes that contain VIM, EZR, AHNAK, BFSP1, BFSP2, ANK2, PLEC, PRX and spectrin. Detected in a complex composed of at least EZR, AHNAK, PPL and PRX. Interacts with PDPN (via cytoplasmic domain); activates RHOA and promotes epithelial-mesenchymal transition. Interacts with SPN/CD43 cytoplasmic tail, CD44 and ICAM2. Interacts with SLC9A3; interaction targets SLC9A3 to the apical membrane. Interacts with SLC9A1; regulates interactions of SLC9A1 with cytoskeletal and promotes stress fiber formation. Interacts with CLIC5; may work together in a complex which also includes RDX and MYO6 to stabilize linkages between the plasma membrane and subjacent actin cytoskeleton at the base of stereocilia. Phosphorylated by tyrosine-protein kinases. Phosphorylation by ROCK2 suppresses the head-to-tail association of the N-terminal and C-terminal halves resulting in an opened conformation which is capable of actin and membrane-binding. Post-translationally, S-nitrosylation is induced by interferon-gamma and oxidatively-modified low-densitity lipoprotein (LDL(ox)) possibly implicating the iNOS-S100A8/9 transnitrosylase complex. Expressed in cerebral cortex, basal ganglia, hippocampus, hypophysis, and optic nerve. Weakly expressed in brain stem and diencephalon. Stronger expression was detected in gray matter of frontal lobe compared to white matter (at protein level). Component of the microvilli of intestinal epithelial cells. Preferentially expressed in astrocytes of hippocampus, frontal cortex, thalamus, parahippocampal cortex, amygdala, insula, and corpus callosum. Not detected in neurons in most tissues studied.

It localises to the apical cell membrane. The protein resides in the cell projection. The protein localises to the microvillus membrane. Its subcellular location is the ruffle membrane. It is found in the cytoplasm. It localises to the cell cortex. The protein resides in the cytoskeleton. The protein localises to the microvillus. With respect to regulation, a head-to-tail association, of the N-terminal and C-terminal halves results in a closed conformation (inactive form) which is incapable of actin or membrane-binding. Functionally, probably involved in connections of major cytoskeletal structures to the plasma membrane. In epithelial cells, required for the formation of microvilli and membrane ruffles on the apical pole. Along with PLEKHG6, required for normal macropinocytosis. The sequence is that of Ezrin (EZR) from Homo sapiens (Human).